We begin with the raw amino-acid sequence, 342 residues long: Flagellar P-ring protein (342 aa).

An N-terminal signal peptide occupies residues Met1–Ala19.

Belongs to the FlgI family. In terms of assembly, the basal body constitutes a major portion of the flagellar organelle and consists of four rings (L,P,S, and M) mounted on a central rod.

It localises to the periplasm. The protein localises to the bacterial flagellum basal body. In terms of biological role, assembles around the rod to form the L-ring and probably protects the motor/basal body from shearing forces during rotation. The chain is Flagellar P-ring protein from Helicobacter pylori (strain G27).